The primary structure comprises 172 residues: 3-hydroxydecanoyl-[acyl-carrier-protein] dehydratase (172 aa).

His71 is an active-site residue.

Belongs to the thioester dehydratase family. FabA subfamily. In terms of assembly, homodimer.

The protein localises to the cytoplasm. The enzyme catalyses a (3R)-hydroxyacyl-[ACP] = a (2E)-enoyl-[ACP] + H2O. It catalyses the reaction (3R)-hydroxydecanoyl-[ACP] = (2E)-decenoyl-[ACP] + H2O. It carries out the reaction (2E)-decenoyl-[ACP] = (3Z)-decenoyl-[ACP]. It participates in lipid metabolism; fatty acid biosynthesis. Its function is as follows. Necessary for the introduction of cis unsaturation into fatty acids. Catalyzes the dehydration of (3R)-3-hydroxydecanoyl-ACP to E-(2)-decenoyl-ACP and then its isomerization to Z-(3)-decenoyl-ACP. Can catalyze the dehydratase reaction for beta-hydroxyacyl-ACPs with saturated chain lengths up to 16:0, being most active on intermediate chain length. The sequence is that of 3-hydroxydecanoyl-[acyl-carrier-protein] dehydratase from Aliivibrio salmonicida (strain LFI1238) (Vibrio salmonicida (strain LFI1238)).